The primary structure comprises 235 residues: Sugar fermentation stimulation protein homolog (235 aa).

It belongs to the SfsA family.

This is Sugar fermentation stimulation protein homolog from Aliivibrio salmonicida (strain LFI1238) (Vibrio salmonicida (strain LFI1238)).